A 256-amino-acid polypeptide reads, in one-letter code: Thiazole synthase (256 aa).

Lys96 acts as the Schiff-base intermediate with DXP in catalysis. 1-deoxy-D-xylulose 5-phosphate contacts are provided by residues Gly157, 183 to 184 (AG), and 205 to 206 (NT).

The protein belongs to the ThiG family. Homotetramer. Forms heterodimers with either ThiH or ThiS.

The protein localises to the cytoplasm. The catalysed reaction is [ThiS sulfur-carrier protein]-C-terminal-Gly-aminoethanethioate + 2-iminoacetate + 1-deoxy-D-xylulose 5-phosphate = [ThiS sulfur-carrier protein]-C-terminal Gly-Gly + 2-[(2R,5Z)-2-carboxy-4-methylthiazol-5(2H)-ylidene]ethyl phosphate + 2 H2O + H(+). Its pathway is cofactor biosynthesis; thiamine diphosphate biosynthesis. Catalyzes the rearrangement of 1-deoxy-D-xylulose 5-phosphate (DXP) to produce the thiazole phosphate moiety of thiamine. Sulfur is provided by the thiocarboxylate moiety of the carrier protein ThiS. In vitro, sulfur can be provided by H(2)S. The protein is Thiazole synthase of Bacillus cereus (strain ATCC 10987 / NRS 248).